Consider the following 72-residue polypeptide: Omega-conotoxin-like S6.6 (72 aa).

Residues 1–22 form the signal peptide; that stretch reads MKLTCVVIVAVLLLTACQLLTA. A propeptide spanning residues 23-45 is cleaved from the precursor; it reads DDSRGTQKHRALRSDTKLSMSTR. 3 cysteine pairs are disulfide-bonded: Cys-46-Cys-61, Cys-53-Cys-65, and Cys-60-Cys-71. A Cysteine amide modification is found at Cys-71.

The protein belongs to the conotoxin O1 superfamily. Expressed by the venom duct.

It is found in the secreted. Functionally, omega-conotoxins act at presynaptic membranes, they bind and block voltage-gated calcium channels (Cav). This toxin blocks N-, P- and Q-type calcium channels. The chain is Omega-conotoxin-like S6.6 from Conus striatus (Striated cone).